A 209-amino-acid chain; its full sequence is Probable L-serine dehydratase, alpha chain (209 aa).

Belongs to the iron-sulfur dependent L-serine dehydratase family. In terms of assembly, heterodimer of an alpha chain and a beta chain. It depends on [4Fe-4S] cluster as a cofactor.

It catalyses the reaction L-serine = pyruvate + NH4(+). The protein operates within carbohydrate biosynthesis; gluconeogenesis. This Latilactobacillus sakei (Lactobacillus sakei) protein is Probable L-serine dehydratase, alpha chain (sdhA).